The sequence spans 32 residues: Cytochrome b6-f complex subunit 7 (32 aa).

The helical transmembrane segment at 9-29 threads the bilayer; the sequence is AILSSVLVLVGLAVGFLLLKV.

Belongs to the PetM family. As to quaternary structure, the 4 large subunits of the cytochrome b6-f complex are cytochrome b6, subunit IV (17 kDa polypeptide, PetD), cytochrome f and the Rieske protein, while the 4 small subunits are PetG, PetL, PetM and PetN. The complex functions as a dimer.

It localises to the plastid. Its subcellular location is the chloroplast thylakoid membrane. Functionally, component of the cytochrome b6-f complex, which mediates electron transfer between photosystem II (PSII) and photosystem I (PSI), cyclic electron flow around PSI, and state transitions. This is Cytochrome b6-f complex subunit 7 from Porphyra purpurea (Red seaweed).